Here is a 503-residue protein sequence, read N- to C-terminus: Glutamate--tRNA ligase (503 aa).

Residues Pro15–Gly25 carry the 'HIGH' region motif. Residues Lys262 to Arg266 carry the 'KMSKS' region motif. Lys265 is a binding site for ATP.

This sequence belongs to the class-I aminoacyl-tRNA synthetase family. Glutamate--tRNA ligase type 1 subfamily. As to quaternary structure, monomer.

The protein localises to the cytoplasm. The catalysed reaction is tRNA(Glu) + L-glutamate + ATP = L-glutamyl-tRNA(Glu) + AMP + diphosphate. Its function is as follows. Catalyzes the attachment of glutamate to tRNA(Glu) in a two-step reaction: glutamate is first activated by ATP to form Glu-AMP and then transferred to the acceptor end of tRNA(Glu). The sequence is that of Glutamate--tRNA ligase from Prosthecochloris aestuarii (strain DSM 271 / SK 413).